The chain runs to 437 residues: Protein translocase subunit SecY (437 aa).

The next 10 helical transmembrane spans lie at Leu-19–Val-39, Leu-69–Leu-89, Val-122–Phe-142, Ile-157–Leu-177, Gly-189–Ile-209, Trp-219–Val-239, Val-276–Ala-296, Pro-316–Ile-336, Gly-378–Ala-398, and Gln-400–Val-420.

Belongs to the SecY/SEC61-alpha family. In terms of assembly, component of the Sec protein translocase complex. Heterotrimer consisting of SecY, SecE and SecG subunits. The heterotrimers can form oligomers, although 1 heterotrimer is thought to be able to translocate proteins. Interacts with the ribosome. Interacts with SecDF, and other proteins may be involved. Interacts with SecA.

It is found in the cell membrane. The central subunit of the protein translocation channel SecYEG. Consists of two halves formed by TMs 1-5 and 6-10. These two domains form a lateral gate at the front which open onto the bilayer between TMs 2 and 7, and are clamped together by SecE at the back. The channel is closed by both a pore ring composed of hydrophobic SecY resides and a short helix (helix 2A) on the extracellular side of the membrane which forms a plug. The plug probably moves laterally to allow the channel to open. The ring and the pore may move independently. The sequence is that of Protein translocase subunit SecY from Streptomyces galbus.